We begin with the raw amino-acid sequence, 487 residues long: GTPase Der (487 aa).

2 EngA-type G domains span residues 3 to 167 (FTLA…EGFA) and 203 to 378 (LQIA…DIWN). GTP is bound by residues 9–16 (GRPNVGKS), 56–60 (DTAGL), 119–122 (NKAE), 209–216 (GRPNAGKS), 256–260 (DTAGM), and 321–324 (NKWD). Residues 379 to 463 (RRITTARLNS…PIRLTMRGQG (85 aa)) enclose the KH-like domain. The segment at 459–487 (MRGQGDKNPFKERKFRTPSRLRKHLGKKG) is disordered. A compositionally biased stretch (basic residues) spans 471–487 (RKFRTPSRLRKHLGKKG).

The protein belongs to the TRAFAC class TrmE-Era-EngA-EngB-Septin-like GTPase superfamily. EngA (Der) GTPase family. As to quaternary structure, associates with the 50S ribosomal subunit.

Functionally, GTPase that plays an essential role in the late steps of ribosome biogenesis. This chain is GTPase Der, found in Cereibacter sphaeroides (strain ATCC 17025 / ATH 2.4.3) (Rhodobacter sphaeroides).